We begin with the raw amino-acid sequence, 64 residues long: Large ribosomal subunit protein bL35 (64 aa).

Positions 1-25 (MPKMKTHRGAAKRLKKTGTGKLKRA) are disordered.

Belongs to the bacterial ribosomal protein bL35 family.

The polypeptide is Large ribosomal subunit protein bL35 (Clostridioides difficile (strain 630) (Peptoclostridium difficile)).